The primary structure comprises 243 residues: 23S rRNA (guanosine-2'-O-)-methyltransferase RlmB (243 aa).

3 residues coordinate S-adenosyl-L-methionine: G196, I216, and L225.

It belongs to the class IV-like SAM-binding methyltransferase superfamily. RNA methyltransferase TrmH family. RlmB subfamily. Homodimer.

It localises to the cytoplasm. The catalysed reaction is guanosine(2251) in 23S rRNA + S-adenosyl-L-methionine = 2'-O-methylguanosine(2251) in 23S rRNA + S-adenosyl-L-homocysteine + H(+). Its function is as follows. Specifically methylates the ribose of guanosine 2251 in 23S rRNA. This chain is 23S rRNA (guanosine-2'-O-)-methyltransferase RlmB, found in Salmonella typhi.